The chain runs to 497 residues: CRISPR-associated endodeoxyribonuclease Cas12f1 (497 aa).

The recognition domain (REC) stretch occupies residues 29 to 122; that stretch reads RKDLSTMSRF…PTYKITTAPI (94 aa). The segment at 123-214 is wedge domain (WED); sequence RLQNNIYKLI…YCIIPYTFPT (92 aa). Residues 215-223 are linker; sequence HETVLDPDK. The segment at 224-374 is ruvC-I; the sequence is VMGVDLGVAK…VAINPQYTSQ (151 aa). Catalysis depends on residues D228 and E327. The segment at 375 to 432 is target nucleic acid-binding (TNB); the sequence is RCSMCGYIEKTNRSSQAVFECKQCGYGSRTICINCRHVQVSGDVCEECGGIVKKENVN. Residues C376, C379, C395, and C398 each coordinate Zn(2+). The interval 433–453 is ruvC-II; sequence ADYNAAKNISTPYIDQIIMEK. Residue D434 is part of the active site.

It belongs to the CRISPR-associated endonuclease Cas12f family. An asymmetric homodimer. Guide RNA is probably required for dimerization. Requires Mg(2+) as cofactor. Zn(2+) serves as cofactor.

Its function is as follows. CRISPR (clustered regularly interspaced short palindromic repeat), is an adaptive immune system that provides protection against mobile genetic elements (viruses, transposable elements and conjugative plasmids). CRISPR clusters contain sequences complementary to antecedent mobile elements and target invading nucleic acids. CRISPR clusters are transcribed and processed into CRISPR RNA (crRNA), which requires a trans-encoded small RNA (tracrRNA), but not this protein. Recognizes a short motif in the CRISPR repeat sequences (the 5' PAM or protospacer adjacent motif, TTC in this organism) to help distinguish self versus nonself, as targets within the CRISPR locus do not have PAMs. Has dsDNA endonuclease activity upon expression in E.coli of this protein, a mini CRISPR array and the probable tracrRNA. Plasmid cleavage is centered around positions 24 base pairs 3' of PAM. The mini system protects E.coli against transformation by foreign plasmids. The polypeptide is CRISPR-associated endodeoxyribonuclease Cas12f1 (Syntrophomonas palmitatica (strain DSM 18709 / JCM 14374 / NBRC 102128 / MPA)).